A 216-amino-acid chain; its full sequence is Pentapeptide repeat protein VPA0095 (216 aa).

Belongs to the pentapeptide repeat protein family.

Functionally, has no effect when overexpressed in E.coli. When Cys-115 is mutated to Tyr and overexpressed it increases (fluoro)quinolone resistance in E.coli up to 16-fold for ciprofloxacin, levofloxacin and nalidixic acid. The protein is Pentapeptide repeat protein VPA0095 of Vibrio parahaemolyticus serotype O3:K6 (strain RIMD 2210633).